A 352-amino-acid polypeptide reads, in one-letter code: C-X-C chemokine receptor type 4 (352 aa).

Residues M1–Y21 are important for chemokine binding and signaling. Residues M1–R38 are Extracellular-facing. Y7 is subject to Sulfotyrosine. N-linked (GlcNAc...) asparagine glycosylation is present at N11. A Sulfotyrosine modification is found at Y12. S18 carries an O-linked (Xyl...) (chondroitin sulfate) serine glycan. Residue Y21 is modified to Sulfotyrosine. 2 cysteine pairs are disulfide-bonded: C28–C274 and C109–C186. Residues I39–M63 form a helical membrane-spanning segment. The Cytoplasmic portion of the chain corresponds to G64 to R77. The helical transmembrane segment at L78–V99 threads the bilayer. Residues W94–D97 are chemokine binding. Residues A100–K110 lie on the Extracellular side of the membrane. A helical transmembrane segment spans residues A111 to I130. The interval H113–T117 is chemokine binding. The Cytoplasmic portion of the chain corresponds to S131–K154. The Important for signaling signature appears at D133–Y135. Residues Y135–P147 are involved in dimerization; when bound to chemokine. Residues V155 to F174 form a helical membrane-spanning segment. The Extracellular segment spans residues A175 to W195. Residues C186–Y190 are chemokine binding, important for signaling. Residues P191–L210 form an involved in dimerization region. Residues V196 to L216 form a helical membrane-spanning segment. Topologically, residues S217–T241 are cytoplasmic. The chain crosses the membrane as a helical span at residues V242–I261. Residues D262–K282 lie on the Extracellular side of the membrane. The tract at residues L266–E268 is involved in dimerization. The chain crosses the membrane as a helical span at residues W283–Y302. The Cytoplasmic segment spans residues A303–S352. Residues S319 and S321 each carry the phosphoserine modification. Phosphoserine; by PKC and GRK6 occurs at positions 324 and 325. The tract at residues L329–S352 is disordered. S330 is subject to Phosphoserine; by GRK6. Residue K331 forms a Glycyl lysine isopeptide (Lys-Gly) (interchain with G-Cter in ubiquitin) linkage. Positions H337–S352 are enriched in low complexity. S339 carries the phosphoserine; by GRK6 modification. Phosphoserine is present on residues S348 and S351.

Belongs to the G-protein coupled receptor 1 family. As to quaternary structure, monomer. Can form homodimers. Interacts with CD164. Interacts with ARRB2; the interaction is dependent on the C-terminal phosphorylation of CXCR4 and allows activation of MAPK1 and MAPK3. Interacts with ARR3; the interaction is dependent on the C-terminal phosphorylation of CXCR4 and modulates calcium mobilization. Interacts with RNF113A; the interaction, enhanced by CXCL12, promotes CXCR4 ubiquitination and subsequent degradation. Interacts (via the cytoplasmic C-terminal) with ITCH (via the WW domains I and II); the interaction, enhanced by CXCL12, promotes CXCR4 ubiquitination and leads to its degradation. Interacts with extracellular ubiquitin. Interacts with DBN1; this interaction is enhanced by antigenic stimulation. Following LPS binding, may form a complex with GDF5, HSP90AA1 and HSPA8. Phosphorylated on agonist stimulation. Rapidly phosphorylated on serine and threonine residues in the C-terminal. Phosphorylation at Ser-324 and Ser-325 leads to recruitment of ITCH, ubiquitination and protein degradation. In terms of processing, ubiquitinated after ligand binding, leading to its degradation. Ubiquitinated by ITCH at the cell membrane on agonist stimulation. The ubiquitin-dependent mechanism, endosomal sorting complex required for transport (ESCRT), then targets CXCR4 for lysosomal degradation. This process is dependent also on prior Ser-/Thr-phosphorylation in the C-terminal of CXCR4. Also binding of ARRB1 to STAM negatively regulates CXCR4 sorting to lysosomes though modulating ubiquitination of SFR5S. Post-translationally, sulfation is required for efficient binding of CXCL12/SDF-1alpha and promotes its dimerization. O- and N-glycosylated. N-glycosylation can mask coreceptor function. The O-glycosylation chondroitin sulfate attachment does not affect interaction with CXCL12/SDF-1alpha nor its coreceptor activity.

Its subcellular location is the cell membrane. It localises to the cell junction. The protein resides in the early endosome. The protein localises to the late endosome. It is found in the lysosome. Receptor for the C-X-C chemokine CXCL12/SDF-1 that transduces a signal by increasing intracellular calcium ion levels and enhancing MAPK1/MAPK3 activation. Involved in the AKT signaling cascade. Plays a role in regulation of cell migration, e.g. during wound healing. Acts as a receptor for extracellular ubiquitin; leading to enhanced intracellular calcium ions and reduced cellular cAMP levels. Binds bacterial lipopolysaccharide (LPS) et mediates LPS-induced inflammatory response, including TNF secretion by monocytes. Involved in hematopoiesis and in cardiac ventricular septum formation. Also plays an essential role in vascularization of the gastrointestinal tract, probably by regulating vascular branching and/or remodeling processes in endothelial cells. Involved in cerebellar development. In the CNS, could mediate hippocampal-neuron survival. In Papio anubis (Olive baboon), this protein is C-X-C chemokine receptor type 4 (CXCR4).